A 410-amino-acid polypeptide reads, in one-letter code: Peptidase T (410 aa).

His79 is a Zn(2+) binding site. The active site involves Asp81. Asp142 contacts Zn(2+). Glu176 (proton acceptor) is an active-site residue. 3 residues coordinate Zn(2+): Glu177, Asp199, and His381.

It belongs to the peptidase M20B family. Zn(2+) serves as cofactor.

It localises to the cytoplasm. It catalyses the reaction Release of the N-terminal residue from a tripeptide.. Cleaves the N-terminal amino acid of tripeptides. This chain is Peptidase T, found in Listeria monocytogenes serotype 4a (strain HCC23).